A 77-amino-acid chain; its full sequence is ATP synthase subunit c (77 aa).

2 helical membrane passes run 7–27 and 57–77; these read AFKY…AALG and VGLI…ILFL.

Belongs to the ATPase C chain family. F-type ATPases have 2 components, F(1) - the catalytic core - and F(0) - the membrane proton channel. F(1) has five subunits: alpha(3), beta(3), gamma(1), delta(1), epsilon(1). F(0) has three main subunits: a(1), b(2) and c(10-14). The alpha and beta chains form an alternating ring which encloses part of the gamma chain. F(1) is attached to F(0) by a central stalk formed by the gamma and epsilon chains, while a peripheral stalk is formed by the delta and b chains.

The protein resides in the cell membrane. F(1)F(0) ATP synthase produces ATP from ADP in the presence of a proton or sodium gradient. F-type ATPases consist of two structural domains, F(1) containing the extramembraneous catalytic core and F(0) containing the membrane proton channel, linked together by a central stalk and a peripheral stalk. During catalysis, ATP synthesis in the catalytic domain of F(1) is coupled via a rotary mechanism of the central stalk subunits to proton translocation. Its function is as follows. Key component of the F(0) channel; it plays a direct role in translocation across the membrane. A homomeric c-ring of between 10-14 subunits forms the central stalk rotor element with the F(1) delta and epsilon subunits. The chain is ATP synthase subunit c from Lactobacillus helveticus (strain DPC 4571).